The primary structure comprises 341 residues: Glycerol-3-phosphate dehydrogenase [NAD(P)+] (341 aa).

Positions 11, 12, 32, and 106 each coordinate NADPH. The sn-glycerol 3-phosphate site is built by lysine 106, glycine 137, and threonine 139. NADPH is bound at residue alanine 141. Residues lysine 192, aspartate 245, serine 255, arginine 256, and asparagine 257 each coordinate sn-glycerol 3-phosphate. Catalysis depends on lysine 192, which acts as the Proton acceptor. Residue arginine 256 participates in NADPH binding. NADPH-binding residues include valine 280 and glutamate 282.

The protein belongs to the NAD-dependent glycerol-3-phosphate dehydrogenase family.

It is found in the cytoplasm. It carries out the reaction sn-glycerol 3-phosphate + NAD(+) = dihydroxyacetone phosphate + NADH + H(+). The enzyme catalyses sn-glycerol 3-phosphate + NADP(+) = dihydroxyacetone phosphate + NADPH + H(+). It functions in the pathway membrane lipid metabolism; glycerophospholipid metabolism. Functionally, catalyzes the reduction of the glycolytic intermediate dihydroxyacetone phosphate (DHAP) to sn-glycerol 3-phosphate (G3P), the key precursor for phospholipid synthesis. In Exiguobacterium sp. (strain ATCC BAA-1283 / AT1b), this protein is Glycerol-3-phosphate dehydrogenase [NAD(P)+].